The sequence spans 147 residues: Endoribonuclease YbeY (147 aa).

His111, His115, and Asp121 together coordinate Zn(2+).

The protein belongs to the endoribonuclease YbeY family. Requires Zn(2+) as cofactor.

The protein localises to the cytoplasm. Functionally, single strand-specific metallo-endoribonuclease involved in late-stage 70S ribosome quality control and in maturation of the 3' terminus of the 16S rRNA. This chain is Endoribonuclease YbeY, found in Amoebophilus asiaticus (strain 5a2).